We begin with the raw amino-acid sequence, 387 residues long: BarH-like 2 homeobox protein (387 aa).

3 disordered regions span residues 1–145 (MTME…FLIK), 157–240 (CAPY…TAFS), and 367–387 (PGGQ…PHPR). Polar residues predominate over residues 7-24 (SGSSFGIDTILSSASSGS). A compositionally biased stretch (low complexity) spans 100–113 (APTQSLQPLPQQQQ). The segment covering 114 to 126 (PLPPQQPPPPPPQ) has biased composition (pro residues). Residues 127-141 (QLGSAASAPRTSTSS) are compositionally biased toward low complexity. Polar residues predominate over residues 160 to 178 (YSTSVSSPHHTPKQESNAV). Residues 180-220 (ESFRPKLEQEDSKTKLDKREDSQSDIKCHGTKEEGDREITS) are compositionally biased toward basic and acidic residues. Positions 232–291 (PRKARTAFSDHQLNQLERSFERQKYLSVQDRMDLAAALNLTDTQVKTWYQNRRTKWKRQT) form a DNA-binding region, homeobox.

This sequence belongs to the BAR homeobox family.

It localises to the nucleus. In terms of biological role, potential regulator of neural basic helix-loop-helix genes. The polypeptide is BarH-like 2 homeobox protein (BARHL2) (Homo sapiens (Human)).